The sequence spans 100 residues: Urease subunit gamma (100 aa).

This sequence belongs to the urease gamma subunit family. In terms of assembly, heterotrimer of UreA (gamma), UreB (beta) and UreC (alpha) subunits. Three heterotrimers associate to form the active enzyme.

It is found in the cytoplasm. It carries out the reaction urea + 2 H2O + H(+) = hydrogencarbonate + 2 NH4(+). Its pathway is nitrogen metabolism; urea degradation; CO(2) and NH(3) from urea (urease route): step 1/1. This Stutzerimonas stutzeri (strain A1501) (Pseudomonas stutzeri) protein is Urease subunit gamma.